Here is a 382-residue protein sequence, read N- to C-terminus: Intermediate transcription factor 3 large subunit (382 aa).

The protein belongs to the poxviruses A23 family. In terms of assembly, heterodimer of a 45 kDa and a 32 kDa subunit.

Functionally, acts with RNA polymerase to initiate transcription from intermediate gene promoters. This is Intermediate transcription factor 3 large subunit (VITF3L) from Oryctolagus cuniculus (Rabbit).